The primary structure comprises 424 residues: Serine--tRNA ligase (424 aa).

Position 233–235 (233–235 (TAE)) interacts with L-serine. ATP-binding positions include 264-266 (RRE) and valine 280. Glutamate 287 is an L-serine binding site. ATP is bound at residue 351–354 (EISS). Serine 386 contributes to the L-serine binding site.

Belongs to the class-II aminoacyl-tRNA synthetase family. Type-1 seryl-tRNA synthetase subfamily. In terms of assembly, homodimer. The tRNA molecule binds across the dimer.

The protein resides in the cytoplasm. The enzyme catalyses tRNA(Ser) + L-serine + ATP = L-seryl-tRNA(Ser) + AMP + diphosphate + H(+). It carries out the reaction tRNA(Sec) + L-serine + ATP = L-seryl-tRNA(Sec) + AMP + diphosphate + H(+). It participates in aminoacyl-tRNA biosynthesis; selenocysteinyl-tRNA(Sec) biosynthesis; L-seryl-tRNA(Sec) from L-serine and tRNA(Sec): step 1/1. Functionally, catalyzes the attachment of serine to tRNA(Ser). Is also able to aminoacylate tRNA(Sec) with serine, to form the misacylated tRNA L-seryl-tRNA(Sec), which will be further converted into selenocysteinyl-tRNA(Sec). In Kosmotoga olearia (strain ATCC BAA-1733 / DSM 21960 / TBF 19.5.1), this protein is Serine--tRNA ligase.